The primary structure comprises 434 residues: Serine--tRNA ligase (434 aa).

239–241 (TAE) provides a ligand contact to L-serine. An ATP-binding site is contributed by 270 to 272 (RSE). Glu-293 serves as a coordination point for L-serine. 357 to 360 (EISS) lines the ATP pocket. Ser-392 contacts L-serine.

This sequence belongs to the class-II aminoacyl-tRNA synthetase family. Type-1 seryl-tRNA synthetase subfamily. As to quaternary structure, homodimer. The tRNA molecule binds across the dimer.

Its subcellular location is the cytoplasm. The catalysed reaction is tRNA(Ser) + L-serine + ATP = L-seryl-tRNA(Ser) + AMP + diphosphate + H(+). It carries out the reaction tRNA(Sec) + L-serine + ATP = L-seryl-tRNA(Sec) + AMP + diphosphate + H(+). Its pathway is aminoacyl-tRNA biosynthesis; selenocysteinyl-tRNA(Sec) biosynthesis; L-seryl-tRNA(Sec) from L-serine and tRNA(Sec): step 1/1. Catalyzes the attachment of serine to tRNA(Ser). Is also able to aminoacylate tRNA(Sec) with serine, to form the misacylated tRNA L-seryl-tRNA(Sec), which will be further converted into selenocysteinyl-tRNA(Sec). This is Serine--tRNA ligase from Cupriavidus taiwanensis (strain DSM 17343 / BCRC 17206 / CCUG 44338 / CIP 107171 / LMG 19424 / R1) (Ralstonia taiwanensis (strain LMG 19424)).